Consider the following 3433-residue polypeptide: Genome polyprotein (3433 aa).

The segment at 2 to 15 (SKKPGGPGKSRAVN) is interaction with host EXOC1. The Cytoplasmic segment spans residues 2–108 (SKKPGGPGKS…SSKQKKRGGK (107 aa)). A hydrophobic; homodimerization of capsid protein C region spans residues 37–72 (LIDGKGPIRFVLALLAFFRFTAIAPTRAVLDRWRGV). Residues 106–123 (GGKTGIAVMIGLIASVGA) constitute a propeptide, ER anchor for the capsid protein C, removed in mature form by serine protease NS3. Residues 109 to 129 (TGIAVMIGLIASVGAVTLSNF) traverse the membrane as a helical segment. The Extracellular portion of the chain corresponds to 130 to 248 (QGKVMMTVNA…KATRYLVKTE (119 aa)). Asn-138 is a glycosylation site (N-linked (GlcNAc...) asparagine; by host). The helical transmembrane segment at 249 to 269 (SWILRNPGYALVAAVIGWMLG) threads the bilayer. At 270 to 275 (SNTMQR) the chain is on the cytoplasmic side. The helical transmembrane segment at 276-290 (VVFVVLLLLVAPAYS) threads the bilayer. Over 291–743 (FNCLGMSNRD…QVFGGAFRSL (453 aa)) the chain is Extracellular. 6 disulfides stabilise this stretch: Cys-293/Cys-320, Cys-350/Cys-406, Cys-350/Cys-411, Cys-364/Cys-395, Cys-382/Cys-406, and Cys-382/Cys-411. Residues 388 to 401 (DRGWGNGCGLFGKG) form a fusion peptide region. Asn-444 carries N-linked (GlcNAc...) asparagine; by host glycosylation. Intrachain disulfides connect Cys-480–Cys-578 and Cys-595–Cys-626. The helical transmembrane segment at 744–764 (FGGMSWITQGLLGALLLWMGI) threads the bilayer. Residues 765–770 (NARDRS) are Cytoplasmic-facing. The helical transmembrane segment at 771 to 791 (IALTFLAVGGVLLFLSVNVHA) threads the bilayer. At 792–1216 (DTGCAIDISR…AFAESNSGGD (425 aa)) the chain is on the extracellular side. 2 disulfide bridges follow: Cys-795/Cys-806 and Cys-846/Cys-934. Asn-921, Asn-966, and Asn-998 each carry an N-linked (GlcNAc...) asparagine; by host glycan. 4 cysteine pairs are disulfide-bonded: Cys-970–Cys-1014, Cys-1071–Cys-1120, Cys-1082–Cys-1103, and Cys-1104–Cys-1107. Residues 1217–1237 (VVHLALMATFKIQPVFMVASF) form a helical membrane-spanning segment. The Cytoplasmic segment spans residues 1238–1245 (LKARWTNQ). A helical transmembrane segment spans residues 1246–1268 (ENILLMLAAVFFQMAYHDARQIL). The Lumenal segment spans residues 1269 to 1288 (LWEIPDVLNSLAVAWMILRA). The helical transmembrane segment at 1289-1309 (ITFTTTSNVVVPLLALLTPGL) threads the bilayer. Topologically, residues 1310-1313 (RCLN) are cytoplasmic. The chain crosses the membrane as a helical span at residues 1314 to 1331 (LDVYRILLLMVGIGSLIR). The Lumenal segment spans residues 1332-1345 (EKRSAAAKKKGASL). The chain crosses the membrane as a helical span at residues 1346 to 1366 (LCLALASTGLFNPMILAAGLI). Topologically, residues 1367–1375 (ACDPNRKRG) are cytoplasmic. A helical membrane pass occupies residues 1376 to 1396 (WPATEVMTAVGLMFAIVGGLA). Residues 1397–1399 (ELD) are Lumenal-facing. A helical membrane pass occupies residues 1400–1420 (IDSMAIPMTIAGLMFAAFVIS). Topologically, residues 1421 to 1477 (GKSTDMWIERTADISWESDAEITGSSERVDVRLDDDGNFQLMNDPGAPWKIWMLRMV) are cytoplasmic. The interacts with and activates NS3 protease stretch occupies residues 1428–1467 (IERTADISWESDAEITGSSERVDVRLDDDGNFQLMNDPGA). An intramembrane region (helical) is located at residues 1478–1498 (CLAISAYTPWAILPSVVGFWI). At 1499 to 2174 (TLQYTKRGGV…RMALEELPDA (676 aa)) the chain is on the cytoplasmic side. Residues 1506–1683 (GGVLWDTPSP…ERMDEPIPAG (178 aa)) form the Peptidase S7 domain. Catalysis depends on charge relay system; for serine protease NS3 activity residues His-1556, Asp-1580, and Ser-1640. One can recognise a Helicase ATP-binding domain in the interval 1686 to 1842 (PEMLRKKQIT…ESNSPISDLQ (157 aa)). Residues 1690–1693 (RKKQ) are important for RNA-binding. Residue 1699–1706 (LHPGAGKT) participates in ATP binding. The DEAH box motif lies at 1790 to 1793 (DEAH). A Helicase C-terminal domain is found at 1853–2018 (GYEWITEYTG…GLIAQFYQPE (166 aa)). Lys-1894 carries the post-translational modification N6-acetyllysine; by host. Residues 2169–2173 (EELPD) form a regulates the ATPase activity of NS3 helicase region. Residues 2175 to 2195 (LQTIALIALLSVMTMGVFFLL) form a helical membrane-spanning segment. At 2196-2200 (MQRKG) the chain is on the lumenal side. The segment at residues 2201 to 2221 (IGKIGLGGAVLGVATFFCWMA) is an intramembrane region (helical). Position 2222 (Glu-2222) is a topological domain, lumenal. A helical membrane pass occupies residues 2223-2243 (VPGTKIAGMLLLSLLLMIVLI). The Cytoplasmic segment spans residues 2244–2258 (PEPEKQRSQTDNQLA). A helical membrane pass occupies residues 2259–2279 (VFLICVMTLVSAVAANEMGWL). Over 2280 to 2312 (DKTKSDISSLFGQRIEVKENFSMGEFLLDLRPA) the chain is Lumenal. Residues 2313–2333 (TAWSLYAVTTAVLTPLLKHLI) constitute an intramembrane region (helical). Over 2334 to 2380 (TSDYINTSLTSINVQASALFTLARGFPFVDVGVSALLLAAGCWGQVT) the chain is Lumenal. A helical membrane pass occupies residues 2381 to 2401 (LTVTVTAATLLFCHYAYMVPG). The Cytoplasmic portion of the chain corresponds to 2402–2444 (WQAEAMRSAQRRTAAGIMKNAVVDGIVATDVPELERTTPIMQK). Residues 2445–2465 (KVGQIMLILVSLAAVVVNPSV) traverse the membrane as a helical segment. The Lumenal segment spans residues 2466–2470 (KTVRE). Residues 2471–2491 (AGILITAAAVTLWENGASSVW) form a helical membrane-spanning segment. Topologically, residues 2492-3433 (NATTAIGLCH…DTTLVEDTVL (942 aa)) are cytoplasmic. Residues 2529 to 2794 (GGAKGRTLGE…DVNLGSGTRA (266 aa)) enclose the mRNA cap 0-1 NS5-type MT domain. Ser-2584 provides a ligand contact to S-adenosyl-L-methionine. Ser-2584 carries the post-translational modification Phosphoserine. Lys-2589 serves as the catalytic For 2'-O-MTase activity. Positions 2614, 2615, 2632, 2633, 2639, 2659, 2660, 2674, and 2675 each coordinate S-adenosyl-L-methionine. Asp-2674 functions as the For 2'-O-MTase activity in the catalytic mechanism. Catalysis depends on for 2'-O-MTase activity residues Lys-2710 and Glu-2746. Tyr-2748 provides a ligand contact to S-adenosyl-L-methionine. Positions 2917 to 2919 (REK) match the Nuclear localization signal motif. Residues Glu-2968, His-2972, Cys-2977, and Cys-2980 each coordinate Zn(2+). Residues 3058 to 3210 (GKIYADDTAG…KPLDDRFATS (153 aa)) form the RdRp catalytic domain. Zn(2+) is bound by residues His-3245, Cys-3261, and Cys-3380. The short motif at 3431-3433 (TVL) is the PDZ-binding element.

This sequence in the N-terminal section; belongs to the class I-like SAM-binding methyltransferase superfamily. mRNA cap 0-1 NS5-type methyltransferase family. Homodimer. Interacts (via N-terminus) with host EXOC1 (via C-terminus); this interaction results in EXOC1 degradation through the proteasome degradation pathway. Interacts with host DDX56; this interaction plays an important role in genomic RNA encapsidation. As to quaternary structure, forms heterodimers with envelope protein E in the endoplasmic reticulum and Golgi. In terms of assembly, homodimer; in the endoplasmic reticulum and Golgi. Homodimer; Homohexamer when secreted. NS1 interacts with NS4B. Interacts with host complement protein CFH; this interaction leads to the degradation of C3. As to quaternary structure, forms a heterodimer with serine protease NS3. May form homooligomers. Interacts with human SPCS1. In terms of assembly, forms a heterodimer with NS2B. Interacts with NS4B. Interacts with unphosphorylated RNA-directed RNA polymerase NS5; this interaction stimulates RNA-directed RNA polymerase NS5 guanylyltransferase activity. Interacts with host RTN3; this interaction is important to remodel host cell membranes. As to quaternary structure, interacts with Serine protease/Helicase NS3. Interacts with NS1. In terms of assembly, homodimer. Interacts with host STAT2; this interaction inhibits the phosphorylation of the latter, and, when all viral proteins are present (polyprotein), targets STAT2 for degradation. Post-translationally, specific enzymatic cleavages in vivo yield mature proteins. Cleavages in the lumen of endoplasmic reticulum are performed by host signal peptidase, whereas cleavages in the cytoplasmic side are performed by serine protease NS3. Signal cleavage at the 2K-4B site requires a prior NS3 protease-mediated cleavage at the 4A-2K site. In terms of processing, cleaved in post-Golgi vesicles by a host furin, releasing the mature small envelope protein M, and peptide pr. This cleavage is incomplete as up to 30% of viral particles still carry uncleaved prM. N-glycosylated. Post-translationally, N-glycosylated. The excreted form is glycosylated and this is required for efficient secretion of the protein from infected cells. In terms of processing, acetylated by host KAT5. Acetylation modulates NS3 RNA-binding and unwinding activities and plays an important positive role for viral replication. Phosphorylated on serines residues. This phosphorylation may trigger NS5 nuclear localization.

It is found in the virion. The protein resides in the host nucleus. It localises to the host cytoplasm. Its subcellular location is the host perinuclear region. The protein localises to the secreted. It is found in the virion membrane. The protein resides in the host endoplasmic reticulum membrane. It catalyses the reaction Selective hydrolysis of -Xaa-Xaa-|-Yaa- bonds in which each of the Xaa can be either Arg or Lys and Yaa can be either Ser or Ala.. The catalysed reaction is RNA(n) + a ribonucleoside 5'-triphosphate = RNA(n+1) + diphosphate. The enzyme catalyses a ribonucleoside 5'-triphosphate + H2O = a ribonucleoside 5'-diphosphate + phosphate + H(+). It carries out the reaction ATP + H2O = ADP + phosphate + H(+). It catalyses the reaction a 5'-end (5'-triphosphoguanosine)-ribonucleoside in mRNA + S-adenosyl-L-methionine = a 5'-end (N(7)-methyl 5'-triphosphoguanosine)-ribonucleoside in mRNA + S-adenosyl-L-homocysteine. The catalysed reaction is a 5'-end (N(7)-methyl 5'-triphosphoguanosine)-ribonucleoside in mRNA + S-adenosyl-L-methionine = a 5'-end (N(7)-methyl 5'-triphosphoguanosine)-(2'-O-methyl-ribonucleoside) in mRNA + S-adenosyl-L-homocysteine + H(+). Plays a role in virus budding by binding to the cell membrane and gathering the viral RNA into a nucleocapsid that forms the core of a mature virus particle. During virus entry, may induce genome penetration into the host cytoplasm after hemifusion induced by the surface proteins. Can migrate to the cell nucleus where it modulates host functions. Overcomes the anti-viral effects of host EXOC1 by sequestering and degrading the latter through the proteasome degradation pathway. Its function is as follows. Inhibits RNA silencing by interfering with host Dicer. Functionally, prevents premature fusion activity of envelope proteins in trans-Golgi by binding to envelope protein E at pH6.0. After virion release in extracellular space, gets dissociated from E dimers. In terms of biological role, acts as a chaperone for envelope protein E during intracellular virion assembly by masking and inactivating envelope protein E fusion peptide. prM is the only viral peptide matured by host furin in the trans-Golgi network probably to avoid catastrophic activation of the viral fusion activity in acidic Golgi compartment prior to virion release. prM-E cleavage is inefficient, and many virions are only partially matured. These uncleaved prM would play a role in immune evasion. May play a role in virus budding. Exerts cytotoxic effects by activating a mitochondrial apoptotic pathway through M ectodomain. May display a viroporin activity. Its function is as follows. Binds to host cell surface receptor and mediates fusion between viral and cellular membranes. Envelope protein is synthesized in the endoplasmic reticulum in the form of heterodimer with protein prM. They play a role in virion budding in the ER, and the newly formed immature particle is covered with 60 spikes composed of heterodimer between precursor prM and envelope protein E. The virion is transported to the Golgi apparatus where the low pH causes dissociation of PrM-E heterodimers and formation of E homodimers. prM-E cleavage is inefficient, and many virions are only partially matured. These uncleaved prM would play a role in immune evasion. Functionally, involved in immune evasion, pathogenesis and viral replication. Once cleaved off the polyprotein, is targeted to three destinations: the viral replication cycle, the plasma membrane and the extracellular compartment. Essential for viral replication. Required for formation of the replication complex and recruitment of other non-structural proteins to the ER-derived membrane structures. Excreted as a hexameric lipoparticle that plays a role against host immune response. Antagonizing the complement function. Binds to the host macrophages and dendritic cells. Inhibits signal transduction originating from Toll-like receptor 3 (TLR3). In terms of biological role, component of the viral RNA replication complex that functions in virion assembly and antagonizes the host alpha/beta interferon antiviral response. Required cofactor for the serine protease function of NS3. May have membrane-destabilizing activity and form viroporins. Its function is as follows. Displays three enzymatic activities: serine protease, NTPase and RNA helicase. NS3 serine protease, in association with NS2B, performs its autocleavage and cleaves the polyprotein at dibasic sites in the cytoplasm: C-prM, NS2A-NS2B, NS2B-NS3, NS3-NS4A, NS4A-2K and NS4B-NS5. NS3 RNA helicase binds RNA and unwinds dsRNA in the 3' to 5' direction. NS3 supports the separation of RNA daughter and template strands during viral replication. The helicase part is involved in the inhibition of phosphorylation of host STAT1, and thereby inhibition of host type-I IFN signaling. In addition, NS3 assists the initiation of replication by unwinding the RNA secondary structure in the 3' non-translated region (NTR). Inhibits STAT2 translocation in the nucleus after IFN-alpha treatment. Functionally, facilitates host membrane remodelling necessary for viral replication by interacting with host RTN3. Regulates the ATPase activity of the NS3 helicase activity. NS4A allows NS3 helicase to conserve energy during unwinding. In terms of biological role, functions as a signal peptide for NS4B and is required for the interferon antagonism activity of the latter. Induces the formation of ER-derived membrane vesicles where the viral replication takes place. Inhibits interferon (IFN)-induced host STAT1 phosphorylation and nuclear translocation, thereby preventing the establishment of cellular antiviral state by blocking the IFN-alpha/beta pathway. Inhibits STAT2 translocation in the nucleus after IFN-alpha treatment. Its function is as follows. Replicates the viral (+) and (-) genome, and performs the capping of genomes in the cytoplasm. NS5 methylates viral RNA cap at guanine N-7 and ribose 2'-O positions. Besides its role in RNA genome replication, also prevents the establishment of cellular antiviral state by blocking the interferon-alpha/beta (IFN-alpha/beta) signaling pathway. Inhibits host JAK1 and TYK2 phosphorylation, thereby preventing activation of JAK-STAT signaling pathway. The polypeptide is Genome polyprotein (Aedes (Tropical bont tick)).